We begin with the raw amino-acid sequence, 100 residues long: Small ribosomal subunit protein uS14 (100 aa).

This sequence belongs to the universal ribosomal protein uS14 family. In terms of assembly, part of the 30S ribosomal subunit. Contacts proteins S3 and S10.

Binds 16S rRNA, required for the assembly of 30S particles and may also be responsible for determining the conformation of the 16S rRNA at the A site. The chain is Small ribosomal subunit protein uS14 from Synechococcus sp. (strain CC9902).